The following is a 297-amino-acid chain: N-acetylmuramic acid 6-phosphate etherase (297 aa).

The SIS domain occupies 56–219 (AIEAFNKGGR…STISMIGIGK (164 aa)). The Proton donor role is filled by E84. Residue E115 is part of the active site.

This sequence belongs to the GCKR-like family. MurNAc-6-P etherase subfamily. Homodimer.

The enzyme catalyses N-acetyl-D-muramate 6-phosphate + H2O = N-acetyl-D-glucosamine 6-phosphate + (R)-lactate. It functions in the pathway amino-sugar metabolism; N-acetylmuramate degradation. In terms of biological role, specifically catalyzes the cleavage of the D-lactyl ether substituent of MurNAc 6-phosphate, producing GlcNAc 6-phosphate and D-lactate. This chain is N-acetylmuramic acid 6-phosphate etherase, found in Lactococcus lactis subsp. cremoris (strain SK11).